Here is a 250-residue protein sequence, read N- to C-terminus: Triosephosphate isomerase (250 aa).

Position 9-11 (9-11) interacts with substrate; it reads NWK. His-95 acts as the Electrophile in catalysis. Glu-167 functions as the Proton acceptor in the catalytic mechanism. Residues Gly-173, Ser-213, and 234 to 235 each bind substrate; that span reads GG.

Belongs to the triosephosphate isomerase family. Homodimer.

It localises to the cytoplasm. The enzyme catalyses D-glyceraldehyde 3-phosphate = dihydroxyacetone phosphate. It participates in carbohydrate biosynthesis; gluconeogenesis. The protein operates within carbohydrate degradation; glycolysis; D-glyceraldehyde 3-phosphate from glycerone phosphate: step 1/1. Involved in the gluconeogenesis. Catalyzes stereospecifically the conversion of dihydroxyacetone phosphate (DHAP) to D-glyceraldehyde-3-phosphate (G3P). This is Triosephosphate isomerase from Chloroflexus aurantiacus (strain ATCC 29366 / DSM 635 / J-10-fl).